The sequence spans 354 residues: UPF0283 membrane protein HI_0043 (354 aa).

3 helical membrane passes run 57–77 (LLKF…VQWI), 87–107 (IYLA…KEII), and 211–231 (ESAV…FIAW).

This sequence belongs to the UPF0283 family.

It is found in the cell inner membrane. This is UPF0283 membrane protein HI_0043 from Haemophilus influenzae (strain ATCC 51907 / DSM 11121 / KW20 / Rd).